The sequence spans 890 residues: Translation initiation factor IF-2 (890 aa).

2 disordered regions span residues 31–164 (KLAQ…PAEP) and 189–266 (FKAP…ESLK). A compositionally biased stretch (basic and acidic residues) spans 42–54 (SSSEKPSAKEKSV). Residues 55–72 (KVALAATSTPTASAEQAS) show a composition bias toward low complexity. The segment covering 114–128 (PEPELEVVDEVCDES) has biased composition (acidic residues). Basic and acidic residues-rich tracts occupy residues 149-163 (PQEK…KPAE) and 242-266 (PKRD…ESLK). Residues 395-564 (IRSPIVAFMG…ALQAEVLELK (170 aa)) form the tr-type G domain. The interval 404 to 411 (GHVDHGKT) is G1. 404–411 (GHVDHGKT) contacts GTP. Positions 429–433 (AITQH) are G2. Residues 450 to 453 (DTPG) form a G3 region. Residues 450 to 454 (DTPGH) and 504 to 507 (NKCD) each bind GTP. The interval 504–507 (NKCD) is G4. The segment at 540–542 (SAK) is G5.

It belongs to the TRAFAC class translation factor GTPase superfamily. Classic translation factor GTPase family. IF-2 subfamily.

It is found in the cytoplasm. In terms of biological role, one of the essential components for the initiation of protein synthesis. Protects formylmethionyl-tRNA from spontaneous hydrolysis and promotes its binding to the 30S ribosomal subunits. Also involved in the hydrolysis of GTP during the formation of the 70S ribosomal complex. The polypeptide is Translation initiation factor IF-2 (infB) (Chlamydia pneumoniae (Chlamydophila pneumoniae)).